We begin with the raw amino-acid sequence, 121 residues long: Small ribosomal subunit protein uS13 (121 aa).

The segment at 94–121 is disordered; it reads GLPVRGQRTRTNARTRKGKRKTVAGKKK.

The protein belongs to the universal ribosomal protein uS13 family. Part of the 30S ribosomal subunit. Forms a loose heterodimer with protein S19. Forms two bridges to the 50S subunit in the 70S ribosome.

Its function is as follows. Located at the top of the head of the 30S subunit, it contacts several helices of the 16S rRNA. In the 70S ribosome it contacts the 23S rRNA (bridge B1a) and protein L5 of the 50S subunit (bridge B1b), connecting the 2 subunits; these bridges are implicated in subunit movement. Contacts the tRNAs in the A and P-sites. The polypeptide is Small ribosomal subunit protein uS13 (Treponema pallidum (strain Nichols)).